The following is a 438-amino-acid chain: MAAPVNNPDHGFCRDCLTFQRSETRRCERCGSPRLARHPELYRLHLAHIDCDAFYAAIEKRDNPALKDKPLIIGGGKRGVVSTACYIARIRGVRSAMPMFKALEACPEAVVIPPNMEKYVRVGREVRAMMQTLTPLVEPLSIDEAFLDFAGTERLHGQPPAVVLARFALAVEKEIGITVSAGLSYCKFLAKIASDFRKPRGFSVIGEAEAVGFLATKPVTMIWGVGKAFNATLERDGIRTIGQLQTMERGDLMRRYGVMGDRLYRLSRGEDVRRVDPDQDAKSVSAETTFDTDIASLDELVSVLRGLSEKVSARLKKSGIAGRTVVLKLKTQDFKLRTRNRQLGDPTRLADRIFQAGVELLRKETDGTKFRLLGIGVSDLSDDDKADPPDLVDVQSRKRAMAEGAIDALRDKFGRKAVETGYTFGRGRDAHPPEPLED.

A UmuC domain is found at 46-226 (LAHIDCDAFY…KPVTMIWGVG (181 aa)). Residues D50 and D143 each coordinate Mg(2+). E144 is a catalytic residue.

It belongs to the DNA polymerase type-Y family. As to quaternary structure, monomer. Mg(2+) serves as cofactor.

The protein localises to the cytoplasm. It catalyses the reaction DNA(n) + a 2'-deoxyribonucleoside 5'-triphosphate = DNA(n+1) + diphosphate. Its function is as follows. Poorly processive, error-prone DNA polymerase involved in untargeted mutagenesis. Copies undamaged DNA at stalled replication forks, which arise in vivo from mismatched or misaligned primer ends. These misaligned primers can be extended by PolIV. Exhibits no 3'-5' exonuclease (proofreading) activity. May be involved in translesional synthesis, in conjunction with the beta clamp from PolIII. This is DNA polymerase IV 1 (dinB1) from Mesorhizobium japonicum (strain LMG 29417 / CECT 9101 / MAFF 303099) (Mesorhizobium loti (strain MAFF 303099)).